The following is a 117-amino-acid chain: Large ribosomal subunit protein eL18 (117 aa).

The protein belongs to the eukaryotic ribosomal protein eL18 family.

This is Large ribosomal subunit protein eL18 from Halobacterium salinarum (strain ATCC 29341 / DSM 671 / R1).